The primary structure comprises 320 residues: Ferrochelatase (320 aa).

Fe cation-binding residues include H194 and E275.

The protein belongs to the ferrochelatase family. As to quaternary structure, monomer.

It localises to the cytoplasm. The enzyme catalyses heme b + 2 H(+) = protoporphyrin IX + Fe(2+). It functions in the pathway porphyrin-containing compound metabolism; protoheme biosynthesis; protoheme from protoporphyrin-IX: step 1/1. In terms of biological role, catalyzes the ferrous insertion into protoporphyrin IX. The protein is Ferrochelatase of Salmonella typhi.